Consider the following 307-residue polypeptide: MTIIIAGPTAGGKTDLALNLAKLIGGEVVSVDSRQVYKYLTVGTAKPEGEYKNGVYNVDGVNYHLVDFLDLDKTYNTGSFTADASNTAYNINKKGKTAIFAGGTGMYMQSYFGGMDVLPKADQALRAQLADIADKEGKQSLHKMLSEADPESAALIPSGNLHRVMRALEIFKLTGKKASELRTNGFADISQNNFMVYIEWDKEELNKRIEIRTQGMFGGMLKETQDMLAKGYTRNSPGLRSLGYAEVIDFIEGKKTKPEALERIVILTRQYAKRQRTWFARYKNMYKADGSALNAEQILAEYAAWKK.

Position 7 to 14 (7 to 14 (GPTAGGKT)) interacts with ATP. Substrate is bound at residue 9 to 14 (TAGGKT). An interaction with substrate tRNA region spans residues 32–35 (DSRQ).

This sequence belongs to the IPP transferase family. Monomer. Requires Mg(2+) as cofactor.

The enzyme catalyses adenosine(37) in tRNA + dimethylallyl diphosphate = N(6)-dimethylallyladenosine(37) in tRNA + diphosphate. Catalyzes the transfer of a dimethylallyl group onto the adenine at position 37 in tRNAs that read codons beginning with uridine, leading to the formation of N6-(dimethylallyl)adenosine (i(6)A). This Elusimicrobium minutum (strain Pei191) protein is tRNA dimethylallyltransferase.